The following is a 623-amino-acid chain: Dynein axonemal intermediate chain 2 (623 aa).

WD repeat units follow at residues 214-254 (KPLS…LVAE), 261-302 (SHRD…EPIE), 362-401 (GHHG…SSIM), 405-445 (YHMA…CDPA), and 450-489 (VCDD…STLQ). Positions 565–602 (AEALKKKPKPRKKSSVKVEAEEEVEENVGEEEEAGGII) are disordered. The span at 570–579 (KKPKPRKKSS) shows a compositional bias: basic residues. Positions 584 to 598 (AEEEVEENVGEEEEA) are enriched in acidic residues.

It belongs to the dynein intermediate chain family. As to quaternary structure, consists of at least two heavy chains and a number of intermediate and light chains. Interacts with DNAAF2. Interacts with DNAAF6/PIH1D3. Interacts with HEATR2; probably involved in outer arm dynein assembly. Interacts with CFAP53. As to expression, predominantly expressed in ovary, testis and lung.

It is found in the cytoplasm. Its subcellular location is the cytoskeleton. The protein resides in the cilium axoneme. It localises to the dynein axonemal particle. Its function is as follows. Part of the dynein complex of respiratory cilia. In Mus musculus (Mouse), this protein is Dynein axonemal intermediate chain 2 (Dnai2).